A 147-amino-acid chain; its full sequence is uncharacterized protein (147 aa).

The protein to M.jannaschii MJ1086 N-terminal region.

This is an uncharacterized protein from Methanocaldococcus jannaschii (strain ATCC 43067 / DSM 2661 / JAL-1 / JCM 10045 / NBRC 100440) (Methanococcus jannaschii).